We begin with the raw amino-acid sequence, 298 residues long: tRNA-uridine aminocarboxypropyltransferase 2 (298 aa).

At methionine 1 the chain carries N-acetylmethionine. The disordered stretch occupies residues methionine 1–alanine 52. Position 132 is a phosphoserine (serine 132). The short motif at aspartate 178–tryptophan 181 is the DXTW element.

It belongs to the TDD superfamily. DTWD2 family.

It is found in the nucleus. Its subcellular location is the cytoplasm. The catalysed reaction is a uridine in tRNA + S-adenosyl-L-methionine = a 3-[(3S)-3-amino-3-carboxypropyl]uridine in tRNA + S-methyl-5'-thioadenosine + H(+). Functionally, catalyzes the formation of 3-(3-amino-3-carboxypropyl)uridine (acp3U) at position 20a in the D-loop of several cytoplasmic tRNAs (acp3U(20a)). Also has a weak activity to form acp3U at position 20 in the D-loop of tRNAs (acp3U(20)). Involved in glycoRNA biosynthesis by mediating formation of acp3U, which acts as an attachment site for N-glycans on tRNAs. GlycoRNAs consist of RNAs modified with secretory N-glycans that are presented on the cell surface. This Macaca fascicularis (Crab-eating macaque) protein is tRNA-uridine aminocarboxypropyltransferase 2.